The chain runs to 262 residues: Putative dimethyl sulfoxide reductase iron-sulfur subunit B (262 aa).

4Fe-4S ferredoxin-type domains lie at 4-34, 62-93, and 94-123; these read YGLVIDQERCIGCQSCSLTCKQENNVPMGQF, LEMTYQPTACQHCENAPCVKVCPVNATYTRDD, and GIVEIDYDKCMGCRYCMAACPYNARVFNWD. Positions 13, 16, 19, 23, 71, 74, 79, 83, 103, 106, 109, 113, 147, 150, 162, and 166 each coordinate [4Fe-4S] cluster. Residues 209–262 are disordered; sequence NGEMSPGRPWKSKKLESELDDDEAAKAARRRSGSVENGYDVTPHVPAETAGGDD.

As to quaternary structure, probable multiprotein complex that likely consists of DmsA, DmsB and DmsC. [4Fe-4S] cluster is required as a cofactor.

It is found in the cell membrane. Its function is as follows. Dimethyl sulfoxide (DMSO) reductase catalyzes the reduction of dimethyl sulfoxide (DMSO) to dimethyl sulfide (DMS) during anaerobic respiration; it can also use trimethylamine N-oxide (TMAO) as terminal electron acceptor. Subunit B is proposed to be involved in electron transfer. This chain is Putative dimethyl sulfoxide reductase iron-sulfur subunit B (dmsB), found in Halobacterium salinarum (strain ATCC 700922 / JCM 11081 / NRC-1) (Halobacterium halobium).